Consider the following 79-residue polypeptide: Acyl carrier protein (79 aa).

Residues 2 to 77 (DNIEQRVKKI…QAIDYATAHV (76 aa)) enclose the Carrier domain. Ser37 bears the O-(pantetheine 4'-phosphoryl)serine mark.

This sequence belongs to the acyl carrier protein (ACP) family. 4'-phosphopantetheine is transferred from CoA to a specific serine of apo-ACP by AcpS. This modification is essential for activity because fatty acids are bound in thioester linkage to the sulfhydryl of the prosthetic group.

The protein localises to the cytoplasm. It functions in the pathway lipid metabolism; fatty acid biosynthesis. Carrier of the growing fatty acid chain in fatty acid biosynthesis. The chain is Acyl carrier protein from Cupriavidus pinatubonensis (strain JMP 134 / LMG 1197) (Cupriavidus necator (strain JMP 134)).